A 306-amino-acid polypeptide reads, in one-letter code: Beta-lactamase (306 aa).

An N-terminal signal peptide occupies residues 1 to 36 (MKLKTKASIKFGICVGLLCLSITGFTPFFNSTHAEA). Catalysis depends on Ser-89, which acts as the Acyl-ester intermediate. 251-253 (KSG) contributes to the substrate binding site.

Belongs to the class-A beta-lactamase family.

The protein localises to the secreted. It carries out the reaction a beta-lactam + H2O = a substituted beta-amino acid. This protein is a beta-lactamase with a substrate specificity for penicillins. The polypeptide is Beta-lactamase (penP) (Bacillus subtilis (strain 168)).